Reading from the N-terminus, the 140-residue chain is Large-conductance mechanosensitive channel (140 aa).

Helical transmembrane passes span 9–29 (AFAL…GAAF) and 86–106 (GSFL…FLMV).

Belongs to the MscL family. In terms of assembly, homopentamer.

It localises to the cell inner membrane. Functionally, channel that opens in response to stretch forces in the membrane lipid bilayer. May participate in the regulation of osmotic pressure changes within the cell. In Anaeromyxobacter dehalogenans (strain 2CP-1 / ATCC BAA-258), this protein is Large-conductance mechanosensitive channel.